The chain runs to 270 residues: Ribosomal RNA small subunit methyltransferase A (270 aa).

6 residues coordinate S-adenosyl-L-methionine: Asn16, Leu18, Gly43, Glu64, Asp89, and Asn110.

It belongs to the class I-like SAM-binding methyltransferase superfamily. rRNA adenine N(6)-methyltransferase family. RsmA subfamily.

It is found in the cytoplasm. It catalyses the reaction adenosine(1518)/adenosine(1519) in 16S rRNA + 4 S-adenosyl-L-methionine = N(6)-dimethyladenosine(1518)/N(6)-dimethyladenosine(1519) in 16S rRNA + 4 S-adenosyl-L-homocysteine + 4 H(+). Its function is as follows. Specifically dimethylates two adjacent adenosines (A1518 and A1519) in the loop of a conserved hairpin near the 3'-end of 16S rRNA in the 30S particle. May play a critical role in biogenesis of 30S subunits. In Pseudomonas fluorescens (strain ATCC BAA-477 / NRRL B-23932 / Pf-5), this protein is Ribosomal RNA small subunit methyltransferase A.